The primary structure comprises 364 residues: UDP-N-acetylglucosamine--N-acetylmuramyl-(pentapeptide) pyrophosphoryl-undecaprenol N-acetylglucosamine transferase (364 aa).

UDP-N-acetyl-alpha-D-glucosamine is bound by residues 10-12 (TGG), N124, R166, S196, I252, and Q297.

It belongs to the glycosyltransferase 28 family. MurG subfamily.

Its subcellular location is the cell membrane. It catalyses the reaction di-trans,octa-cis-undecaprenyl diphospho-N-acetyl-alpha-D-muramoyl-L-alanyl-D-glutamyl-meso-2,6-diaminopimeloyl-D-alanyl-D-alanine + UDP-N-acetyl-alpha-D-glucosamine = di-trans,octa-cis-undecaprenyl diphospho-[N-acetyl-alpha-D-glucosaminyl-(1-&gt;4)]-N-acetyl-alpha-D-muramoyl-L-alanyl-D-glutamyl-meso-2,6-diaminopimeloyl-D-alanyl-D-alanine + UDP + H(+). The protein operates within cell wall biogenesis; peptidoglycan biosynthesis. Cell wall formation. Catalyzes the transfer of a GlcNAc subunit on undecaprenyl-pyrophosphoryl-MurNAc-pentapeptide (lipid intermediate I) to form undecaprenyl-pyrophosphoryl-MurNAc-(pentapeptide)GlcNAc (lipid intermediate II). The polypeptide is UDP-N-acetylglucosamine--N-acetylmuramyl-(pentapeptide) pyrophosphoryl-undecaprenol N-acetylglucosamine transferase (Ruminiclostridium cellulolyticum (strain ATCC 35319 / DSM 5812 / JCM 6584 / H10) (Clostridium cellulolyticum)).